The sequence spans 734 residues: Photosystem I P700 chlorophyll a apoprotein A2 (734 aa).

Transmembrane regions (helical) follow at residues 46–69, 135–158, 175–199, 273–291, 330–353, 369–395, 417–439, and 517–535; these read IFAS…FHVA, LYTG…LHLQ, LNHH…HVAI, IAHH…GHMY, IHFQ…QHMY, AALY…IFFI, AIKS…LYVH, and FLVH…LILV. [4Fe-4S] cluster-binding residues include Cys-559 and Cys-568. 2 consecutive transmembrane segments (helical) span residues 575–596 and 643–665; these read AFYL…YWHW and LSVW…MFLI. Chlorophyll a is bound by residues His-654, Met-662, and Tyr-670. Trp-671 lines the phylloquinone pocket. Residues 707-727 form a helical membrane-spanning segment; the sequence is LVGLAHFSVGYIFTYAAFLIA.

The protein belongs to the PsaA/PsaB family. In terms of assembly, the PsaA/B heterodimer binds the P700 chlorophyll special pair and subsequent electron acceptors. PSI consists of a core antenna complex that captures photons, and an electron transfer chain that converts photonic excitation into a charge separation. The eukaryotic PSI reaction center is composed of at least 11 subunits. P700 is a chlorophyll a/chlorophyll a' dimer, A0 is one or more chlorophyll a, A1 is one or both phylloquinones and FX is a shared 4Fe-4S iron-sulfur center. is required as a cofactor.

The protein resides in the plastid. The protein localises to the chloroplast thylakoid membrane. The enzyme catalyses reduced [plastocyanin] + hnu + oxidized [2Fe-2S]-[ferredoxin] = oxidized [plastocyanin] + reduced [2Fe-2S]-[ferredoxin]. Its function is as follows. PsaA and PsaB bind P700, the primary electron donor of photosystem I (PSI), as well as the electron acceptors A0, A1 and FX. PSI is a plastocyanin-ferredoxin oxidoreductase, converting photonic excitation into a charge separation, which transfers an electron from the donor P700 chlorophyll pair to the spectroscopically characterized acceptors A0, A1, FX, FA and FB in turn. Oxidized P700 is reduced on the lumenal side of the thylakoid membrane by plastocyanin. This Drimys granadensis protein is Photosystem I P700 chlorophyll a apoprotein A2.